Consider the following 230-residue polypeptide: uncharacterized protein (230 aa).

An N-terminal signal peptide occupies residues 1 to 16 (MTCVNVCFFLFPPCHR). Transmembrane regions (helical) follow at residues 27–47 (VDLL…IPLI), 118–138 (LFFF…FLFF), 150–170 (FPIL…LSFL), and 172–191 (SLSH…LRVF).

The protein localises to the cytoplasm. The protein resides in the nucleus membrane. This is an uncharacterized protein from Schizosaccharomyces pombe (strain 972 / ATCC 24843) (Fission yeast).